The sequence spans 884 residues: Kinesin-like protein KIN-7C (884 aa).

Residues 33 to 355 (RIQVLVRLRP…LLFGSCAKEV (323 aa)) form the Kinesin motor domain. An ATP-binding site is contributed by 119-126 (GQTSSGKT). A coiled-coil region spans residues 364–435 (VMSDKALVKH…LQDLLQSVGD (72 aa)). The interval 434–530 (GDHDLNRQVQ…VNSRHSRPSG (97 aa)) is disordered. Residues 449 to 460 (RSPPSVGMPPSV) show a composition bias toward low complexity. The segment covering 461 to 483 (SRDDSSQVSHDDSDLYKEVRCIE) has biased composition (basic and acidic residues). Residues 498–523 (GESSSPQDSNMNSGLHGNDSNASVNS) show a composition bias toward polar residues.

Belongs to the TRAFAC class myosin-kinesin ATPase superfamily. Kinesin family. KIN-7 subfamily.

This chain is Kinesin-like protein KIN-7C, found in Oryza sativa subsp. japonica (Rice).